Reading from the N-terminus, the 310-residue chain is MATKNEEILRKPDWLKIKLNTNENYTGLKKMMREKNLHTVCEEAKCPNIHECWGERRTATFMILGAVCTRACRFCAVKTGLPNELDLGEPERVAESVELMNLKHVVITAVARDDLRDAGSNVYAETVRKVRERNPYTTIEILPSDMGGDYDALETLMASKPDILNHNIETVRRLTPRVRARATYDRTLEFLRRSKELQPDIPTKSSIMVGLGETIEELHETMDDLRAADVDILTIGQYLQPSRKHLKVQKYYSPLEFGKLRKVAMEKGFKHCQAGPLVRSSYHADEQVNEAAKERQRIGDEKLEAAKNEA.

[4Fe-4S] cluster contacts are provided by C41, C46, C52, C68, C72, C75, and S281. Positions 54–270 (GERRTATFMI…RKVAMEKGFK (217 aa)) constitute a Radical SAM core domain. Residues 285-310 (DEQVNEAAKERQRIGDEKLEAAKNEA) form a disordered region.

It belongs to the radical SAM superfamily. Lipoyl synthase family. It depends on [4Fe-4S] cluster as a cofactor.

Its subcellular location is the cytoplasm. It catalyses the reaction [[Fe-S] cluster scaffold protein carrying a second [4Fe-4S](2+) cluster] + N(6)-octanoyl-L-lysyl-[protein] + 2 oxidized [2Fe-2S]-[ferredoxin] + 2 S-adenosyl-L-methionine + 4 H(+) = [[Fe-S] cluster scaffold protein] + N(6)-[(R)-dihydrolipoyl]-L-lysyl-[protein] + 4 Fe(3+) + 2 hydrogen sulfide + 2 5'-deoxyadenosine + 2 L-methionine + 2 reduced [2Fe-2S]-[ferredoxin]. It functions in the pathway protein modification; protein lipoylation via endogenous pathway; protein N(6)-(lipoyl)lysine from octanoyl-[acyl-carrier-protein]. Its function is as follows. Catalyzes the radical-mediated insertion of two sulfur atoms into the C-6 and C-8 positions of the octanoyl moiety bound to the lipoyl domains of lipoate-dependent enzymes, thereby converting the octanoylated domains into lipoylated derivatives. This Staphylococcus carnosus (strain TM300) protein is Lipoyl synthase.